Reading from the N-terminus, the 253-residue chain is Purine nucleoside phosphorylase DR_1966 (253 aa).

Residues His-72, Cys-106, and His-123 each coordinate Zn(2+).

The protein belongs to the purine nucleoside phosphorylase YfiH/LACC1 family. Homodimer. Cu(2+) is required as a cofactor. Zn(2+) serves as cofactor.

It catalyses the reaction adenosine + phosphate = alpha-D-ribose 1-phosphate + adenine. It carries out the reaction S-methyl-5'-thioadenosine + phosphate = 5-(methylsulfanyl)-alpha-D-ribose 1-phosphate + adenine. The catalysed reaction is inosine + phosphate = alpha-D-ribose 1-phosphate + hypoxanthine. The enzyme catalyses adenosine + H2O + H(+) = inosine + NH4(+). Purine nucleoside enzyme that catalyzes the phosphorolysis of adenosine and inosine nucleosides, yielding D-ribose 1-phosphate and the respective free bases, adenine and hypoxanthine. Also catalyzes the phosphorolysis of S-methyl-5'-thioadenosine into adenine and S-methyl-5-thio-alpha-D-ribose 1-phosphate. Also has adenosine deaminase activity. The polypeptide is Purine nucleoside phosphorylase DR_1966 (Deinococcus radiodurans (strain ATCC 13939 / DSM 20539 / JCM 16871 / CCUG 27074 / LMG 4051 / NBRC 15346 / NCIMB 9279 / VKM B-1422 / R1)).